Here is a 236-residue protein sequence, read N- to C-terminus: Leucyl/phenylalanyl-tRNA--protein transferase (236 aa).

This sequence belongs to the L/F-transferase family.

Its subcellular location is the cytoplasm. The catalysed reaction is N-terminal L-lysyl-[protein] + L-leucyl-tRNA(Leu) = N-terminal L-leucyl-L-lysyl-[protein] + tRNA(Leu) + H(+). The enzyme catalyses N-terminal L-arginyl-[protein] + L-leucyl-tRNA(Leu) = N-terminal L-leucyl-L-arginyl-[protein] + tRNA(Leu) + H(+). It carries out the reaction L-phenylalanyl-tRNA(Phe) + an N-terminal L-alpha-aminoacyl-[protein] = an N-terminal L-phenylalanyl-L-alpha-aminoacyl-[protein] + tRNA(Phe). Its function is as follows. Functions in the N-end rule pathway of protein degradation where it conjugates Leu, Phe and, less efficiently, Met from aminoacyl-tRNAs to the N-termini of proteins containing an N-terminal arginine or lysine. The chain is Leucyl/phenylalanyl-tRNA--protein transferase from Yersinia pseudotuberculosis serotype O:1b (strain IP 31758).